The following is a 156-amino-acid chain: Small ribosomal subunit protein uS7 (156 aa).

The protein belongs to the universal ribosomal protein uS7 family. In terms of assembly, part of the 30S ribosomal subunit. Contacts proteins S9 and S11.

One of the primary rRNA binding proteins, it binds directly to 16S rRNA where it nucleates assembly of the head domain of the 30S subunit. Is located at the subunit interface close to the decoding center, probably blocks exit of the E-site tRNA. This Cellvibrio japonicus (strain Ueda107) (Pseudomonas fluorescens subsp. cellulosa) protein is Small ribosomal subunit protein uS7.